A 126-amino-acid polypeptide reads, in one-letter code: DNA-directed RNA polymerase subunit omega (126 aa).

Belongs to the RNA polymerase subunit omega family. As to quaternary structure, the RNAP catalytic core consists of 2 alpha, 1 beta, 1 beta' and 1 omega subunit. When a sigma factor is associated with the core the holoenzyme is formed, which can initiate transcription.

The catalysed reaction is RNA(n) + a ribonucleoside 5'-triphosphate = RNA(n+1) + diphosphate. Its function is as follows. Promotes RNA polymerase assembly. Latches the N- and C-terminal regions of the beta' subunit thereby facilitating its interaction with the beta and alpha subunits. The chain is DNA-directed RNA polymerase subunit omega from Rickettsia felis (strain ATCC VR-1525 / URRWXCal2) (Rickettsia azadi).